The sequence spans 344 residues: tRNA N6-adenosine threonylcarbamoyltransferase (344 aa).

2 residues coordinate Fe cation: His-114 and His-118. Substrate is bound by residues 136 to 140, Asp-170, Gly-183, Asp-187, and Asn-278; that span reads LVSGG. Asp-306 contacts Fe cation. The tract at residues 325–344 is disordered; sequence PSPLDVPSDPGLPVMQGQVR.

It belongs to the KAE1 / TsaD family. Fe(2+) serves as cofactor.

It localises to the cytoplasm. The enzyme catalyses L-threonylcarbamoyladenylate + adenosine(37) in tRNA = N(6)-L-threonylcarbamoyladenosine(37) in tRNA + AMP + H(+). Functionally, required for the formation of a threonylcarbamoyl group on adenosine at position 37 (t(6)A37) in tRNAs that read codons beginning with adenine. Is involved in the transfer of the threonylcarbamoyl moiety of threonylcarbamoyl-AMP (TC-AMP) to the N6 group of A37, together with TsaE and TsaB. TsaD likely plays a direct catalytic role in this reaction. This chain is tRNA N6-adenosine threonylcarbamoyltransferase, found in Mycobacterium tuberculosis (strain ATCC 25177 / H37Ra).